The following is a 266-amino-acid chain: Putative pyruvate, phosphate dikinase regulatory protein (266 aa).

149 to 156 (GVSRTSKT) is an ADP binding site.

This sequence belongs to the pyruvate, phosphate/water dikinase regulatory protein family. PDRP subfamily.

The catalysed reaction is N(tele)-phospho-L-histidyl/L-threonyl-[pyruvate, phosphate dikinase] + ADP = N(tele)-phospho-L-histidyl/O-phospho-L-threonyl-[pyruvate, phosphate dikinase] + AMP + H(+). The enzyme catalyses N(tele)-phospho-L-histidyl/O-phospho-L-threonyl-[pyruvate, phosphate dikinase] + phosphate + H(+) = N(tele)-phospho-L-histidyl/L-threonyl-[pyruvate, phosphate dikinase] + diphosphate. Its function is as follows. Bifunctional serine/threonine kinase and phosphorylase involved in the regulation of the pyruvate, phosphate dikinase (PPDK) by catalyzing its phosphorylation/dephosphorylation. In Geobacillus kaustophilus (strain HTA426), this protein is Putative pyruvate, phosphate dikinase regulatory protein.